The following is a 91-amino-acid chain: Uteroglobin (91 aa).

Residues methionine 1 to alanine 21 form the signal peptide.

Belongs to the secretoglobin family. Antiparallel homodimer; disulfide-linked. Interaction with LMBR1L is controversial.

The protein resides in the secreted. Functionally, uteroglobin binds progesterone specifically and with high affinity. It may regulate progesterone concentrations reaching the blastocyst. It is also a potent inhibitor of phospholipase A2. This Lepus capensis (Brown hare) protein is Uteroglobin (SCGB1A1).